Reading from the N-terminus, the 125-residue chain is RutC family protein STK_08110 (125 aa).

It belongs to the RutC family.

The polypeptide is RutC family protein STK_08110 (Sulfurisphaera tokodaii (strain DSM 16993 / JCM 10545 / NBRC 100140 / 7) (Sulfolobus tokodaii)).